The chain runs to 98 residues: Large ribosomal subunit protein uL23 (98 aa).

The protein belongs to the universal ribosomal protein uL23 family. As to quaternary structure, part of the 50S ribosomal subunit. Contacts protein L29, and trigger factor when it is bound to the ribosome.

Functionally, one of the early assembly proteins it binds 23S rRNA. One of the proteins that surrounds the polypeptide exit tunnel on the outside of the ribosome. Forms the main docking site for trigger factor binding to the ribosome. This is Large ribosomal subunit protein uL23 from Lactobacillus johnsonii (strain CNCM I-12250 / La1 / NCC 533).